The following is a 493-amino-acid chain: Glutamyl-tRNA(Gln) amidotransferase subunit A (493 aa).

Catalysis depends on charge relay system residues Lys78 and Ser158. Ser182 acts as the Acyl-ester intermediate in catalysis.

Belongs to the amidase family. GatA subfamily. As to quaternary structure, heterotrimer of A, B and C subunits.

It catalyses the reaction L-glutamyl-tRNA(Gln) + L-glutamine + ATP + H2O = L-glutaminyl-tRNA(Gln) + L-glutamate + ADP + phosphate + H(+). Functionally, allows the formation of correctly charged Gln-tRNA(Gln) through the transamidation of misacylated Glu-tRNA(Gln) in organisms which lack glutaminyl-tRNA synthetase. The reaction takes place in the presence of glutamine and ATP through an activated gamma-phospho-Glu-tRNA(Gln). The polypeptide is Glutamyl-tRNA(Gln) amidotransferase subunit A (Rickettsia typhi (strain ATCC VR-144 / Wilmington)).